We begin with the raw amino-acid sequence, 551 residues long: ATP-dependent RNA helicase MRH4, mitochondrial (551 aa).

The transit peptide at 1–13 directs the protein to the mitochondrion; it reads MPPNLTPRSFNRD. The Q motif motif lies at 43 to 73; it reads RTFDDFGLEEGLVKSLKGLYGEDGKTTPIET. Residues 85–293 form the Helicase ATP-binding domain; that stretch reads ASAPIGSQRV…TTNPFFTKKE (209 aa). 98 to 105 serves as a coordination point for ATP; that stretch reads AETGSGKT. A DEAD box motif is present at residues 242 to 245; sequence DEAD. One can recognise a Helicase C-terminal domain in the interval 334-551; that stretch reads TLAEDAKAAK…VGAMGKRVRT (218 aa). Positions 504 to 527 are disordered; the sequence is LGEGAKNNKGGKGQGPLKKDGKTA.

The protein belongs to the DEAD box helicase family. MRH4 subfamily.

Its subcellular location is the mitochondrion. The enzyme catalyses ATP + H2O = ADP + phosphate + H(+). Functionally, ATP-binding RNA helicase involved in mitochondrial RNA metabolism. Required for maintenance of mitochondrial DNA. The chain is ATP-dependent RNA helicase MRH4, mitochondrial (MRH4) from Cryptococcus neoformans var. neoformans serotype D (strain B-3501A) (Filobasidiella neoformans).